The sequence spans 173 residues: Siroheme decarboxylase alpha subunit (173 aa).

Residues His115 and Arg119 each contribute to the substrate site.

This sequence belongs to the Ahb/Nir family. Forms a heterodimer composed of AhbA and AhbB.

It carries out the reaction siroheme + 2 H(+) = 12,18-didecarboxysiroheme + 2 CO2. It functions in the pathway porphyrin-containing compound metabolism; protoheme biosynthesis. In terms of biological role, involved in siroheme-dependent heme b biosynthesis. Catalyzes the decarboxylation of siroheme into didecarboxysiroheme. Siroheme is decarboxylated to monodecarboxysiroheme, which is in turn decarboxylated to didecarboxysiroheme. The chain is Siroheme decarboxylase alpha subunit from Desulfovibrio desulfuricans (strain ATCC 27774 / DSM 6949 / MB).